The chain runs to 109 residues: MSDNPDTHDLNSDVLRLYSSTGHEFVLSRKMSYVSGTIKSMLSGDNSNFMEDQNNEIRFREISTPVLEKVIQYFYFKNKYTNSTTDLPEFPINEKVVVDLLLAAHFLDT.

It belongs to the SKP1 family.

Its subcellular location is the nucleus. In terms of biological role, SIII, also known as elongin, is a general transcription elongation factor that increases the RNA polymerase II transcription elongation past template-encoded arresting sites. Subunit A is transcriptionally active and its transcription activity is strongly enhanced by binding to the dimeric complex of the SIII regulatory subunits B and C (elongin BC complex). The elongin BC complex seems to be involved as an adapter protein in the proteasomal degradation of target proteins via different E3 ubiquitin ligase complexes. The protein is Elongin-C (tceb1) of Dictyostelium discoideum (Social amoeba).